The chain runs to 600 residues: Glutamine--fructose-6-phosphate aminotransferase [isomerizing] (600 aa).

Residue Cys2 is the Nucleophile; for GATase activity of the active site. The Glutamine amidotransferase type-2 domain occupies 2–217; that stretch reads CGIVGYIGTE…DEEIVIVTKD (216 aa). SIS domains are found at residues 283-422 and 452-590; these read IRQA…AKGI and IARD…VDKP. The active-site For Fru-6P isomerization activity is the Lys595.

As to quaternary structure, homodimer.

It is found in the cytoplasm. It catalyses the reaction D-fructose 6-phosphate + L-glutamine = D-glucosamine 6-phosphate + L-glutamate. Its function is as follows. Catalyzes the first step in hexosamine metabolism, converting fructose-6P into glucosamine-6P using glutamine as a nitrogen source. The protein is Glutamine--fructose-6-phosphate aminotransferase [isomerizing] of Halalkalibacterium halodurans (strain ATCC BAA-125 / DSM 18197 / FERM 7344 / JCM 9153 / C-125) (Bacillus halodurans).